The primary structure comprises 388 residues: MAAINVIFISGAIALFALTGSCSESTNPFTNKPYATQNPYSPPQTNQPTKRPYQPGPAPTPAPYIPQKTNPPTKRPLNPTPSPTAKPPSENSESENSEGPVLIEEDHFTVDANFKCGIPPVEPDLKKGKIVGGAEAVPNSWPYAAAFGTYDISGGKLEVSQMCGSTIITPRHALTAAHCFMMDPDIDQTYYIFMGLHDETTYKGVRPNKIVGVRYHPKTNVFTDDPWLVYDFAILTLRKKVIANFAWNYACLPQPKKIPPEGTICWSVGWGVTQNTGGDNVLKQVAIDLVSEKRCKEEYRSTITSKSTICGGTTPGQDTCQGDSGGPLFCKEDGKWYLQGIVSYGPSVCGSGPMAAYAAVAYNLEWLCCYMPNLPSCEDIECDESGEN.

The first 22 residues, 1–22, serve as a signal peptide directing secretion; it reads MAAINVIFISGAIALFALTGSC. The segment covering 29-49 has biased composition (polar residues); it reads FTNKPYATQNPYSPPQTNQPT. The segment at 29–98 is disordered; sequence FTNKPYATQN…SENSESENSE (70 aa). Positions 54-64 are enriched in pro residues; sequence QPGPAPTPAPY. 5 cysteine pairs are disulfide-bonded: C116–C251, C163–C179, C265–C330, C295–C310, and C320–C349. Residues 130-372 form the Peptidase S1 domain; sequence IVGGAEAVPN…NLEWLCCYMP (243 aa). Active-site charge relay system residues include H178 and D231. S324 serves as the catalytic Charge relay system.

It belongs to the peptidase S1 family. In terms of assembly, heterodimer of a heavy chain and either an L1 light chain or an L2 light chain linked by a disulfide bond. In terms of tissue distribution, detected in sperm, but not in unfertilized eggs (at protein level). Expressed in gonad, but not in hepatopancreas, intestine or branchial basket.

It is found in the secreted. It catalyses the reaction Hydrolyzes arginyl bonds, preferably with Pro in the P2 position.. Its activity is regulated as follows. Inhibited by peptidyl-argininals with Pro in the P2 position, diisopropyl fluorophosphate, phenylmethanesulfonyl fluoride, leupeptin, antipain, soybean trypsin inhibitor, aprotinin, ovomucoid, valyl-prolyl-arginyl-chloromethane, glycyl-valyl-arginyl-chloromethane, p-aminobenzamidine, benzamidine, zinc chloride and mercuric chloride. Its function is as follows. Trypsin-like protease with a narrow substrate specificity. Preferentially hydrolyzes substrates with Pro in the P2 position and Val in the P3 position. Plays a role in fertilization. The chain is Spermosin from Halocynthia roretzi (Sea squirt).